The sequence spans 499 residues: Putative protein phosphatase 2C 76 (499 aa).

An N-terminal signal peptide occupies residues 1–34 (MRLGCSGRRRRLLRAALLRLVVLVLVAPPRRCAG). A disordered region spans residues 67–101 (AGSGGEGDGDRRSSSSSPPPPPHPRGCHVAVDRGR). The PPM-type phosphatase domain maps to 92 to 457 (GCHVAVDRGR…DNVAAVIVPL (366 aa)). Residues aspartate 138 and glycine 139 each coordinate Mn(2+). The segment at 286–306 (KKTSVVSGKRRRKRNSNNRDD) is disordered. Residues aspartate 397 and aspartate 448 each contribute to the Mn(2+) site.

Belongs to the PP2C family. The cofactor is Mg(2+). Requires Mn(2+) as cofactor.

The catalysed reaction is O-phospho-L-seryl-[protein] + H2O = L-seryl-[protein] + phosphate. It carries out the reaction O-phospho-L-threonyl-[protein] + H2O = L-threonyl-[protein] + phosphate. The chain is Putative protein phosphatase 2C 76 from Oryza sativa subsp. japonica (Rice).